A 112-amino-acid chain; its full sequence is Cytochrome c6 (112 aa).

A signal peptide spans 1-25 (MKTLLTILALTLVTLTTWLSTPAFA). Heme c-binding residues include C39, C42, H43, and M83.

It belongs to the cytochrome c family. PetJ subfamily. As to quaternary structure, monomer. Binds 1 heme c group covalently per subunit.

It localises to the cellular thylakoid lumen. Functions as an electron carrier between membrane-bound cytochrome b6-f and photosystem I in oxygenic photosynthesis. In Synechococcus sp. (strain ATCC 27167 / PCC 6312), this protein is Cytochrome c6.